The sequence spans 250 residues: Ubiquinone/menaquinone biosynthesis C-methyltransferase UbiE (250 aa).

S-adenosyl-L-methionine is bound by residues T73, D94, and 122–123 (DA).

Belongs to the class I-like SAM-binding methyltransferase superfamily. MenG/UbiE family.

The enzyme catalyses a 2-demethylmenaquinol + S-adenosyl-L-methionine = a menaquinol + S-adenosyl-L-homocysteine + H(+). The catalysed reaction is a 2-methoxy-6-(all-trans-polyprenyl)benzene-1,4-diol + S-adenosyl-L-methionine = a 5-methoxy-2-methyl-3-(all-trans-polyprenyl)benzene-1,4-diol + S-adenosyl-L-homocysteine + H(+). The protein operates within quinol/quinone metabolism; menaquinone biosynthesis; menaquinol from 1,4-dihydroxy-2-naphthoate: step 2/2. Its pathway is cofactor biosynthesis; ubiquinone biosynthesis. Its function is as follows. Methyltransferase required for the conversion of demethylmenaquinol (DMKH2) to menaquinol (MKH2) and the conversion of 2-polyprenyl-6-methoxy-1,4-benzoquinol (DDMQH2) to 2-polyprenyl-3-methyl-6-methoxy-1,4-benzoquinol (DMQH2). This is Ubiquinone/menaquinone biosynthesis C-methyltransferase UbiE from Coxiella burnetii (strain RSA 493 / Nine Mile phase I).